Reading from the N-terminus, the 119-residue chain is U-scoloptoxin(16)-Er11a (119 aa).

The first 19 residues, 1-19 (MKSWTAAVLSLGLIYLSIS), serve as a signal peptide directing secretion.

It belongs to the scoloptoxin-16 family. Contains 4 disulfide bonds. Expressed by the venom gland.

The protein resides in the secreted. The sequence is that of U-scoloptoxin(16)-Er11a from Ethmostigmus rubripes (Giant centipede).